The primary structure comprises 187 residues: uncharacterized protein (187 aa).

Over residues 139 to 168 (ESKDRKALKNAARKAEKNAHEESSYFRVDD) the composition is skewed to basic and acidic residues. Positions 139–172 (ESKDRKALKNAARKAEKNAHEESSYFRVDDPEPE) are disordered.

This is an uncharacterized protein from Caenorhabditis elegans.